Reading from the N-terminus, the 389-residue chain is Chalcone synthase 1 (389 aa).

Cys164 is a catalytic residue.

The protein belongs to the thiolase-like superfamily. Chalcone/stilbene synthases family.

The catalysed reaction is (E)-4-coumaroyl-CoA + 3 malonyl-CoA + 3 H(+) = 2',4,4',6'-tetrahydroxychalcone + 3 CO2 + 4 CoA. The protein operates within secondary metabolite biosynthesis; flavonoid biosynthesis. Its function is as follows. The primary product of this enzyme is 4,2',4',6'-tetrahydroxychalcone (also termed naringenin-chalcone or chalcone) which can under specific conditions spontaneously isomerize into naringenin. This is Chalcone synthase 1 (CHS1) from Solanum lycopersicum (Tomato).